Reading from the N-terminus, the 179-residue chain is MTLTSAEKEMSGVLTFFQKEIRGFRTGKAHPALVETVTVEVYGTTMRLSDIASISVSDTRQLLISPYDAGNVSAISKGILAANLNLQPIVEGATVRINVPEPTEEYRREVIKQLKRKSEEAKVSIRNIRRTCNDRLKKDDSLTEDAVKGLEKKIQELTDKFCKQIEELAKQKEAELSSI.

Belongs to the RRF family.

Its subcellular location is the cytoplasm. Functionally, responsible for the release of ribosomes from messenger RNA at the termination of protein biosynthesis. May increase the efficiency of translation by recycling ribosomes from one round of translation to another. The sequence is that of Ribosome-recycling factor from Chlamydia muridarum (strain MoPn / Nigg).